The following is a 299-amino-acid chain: Taste receptor type 2 member 1 (299 aa).

Residues 1 to 9 (MLESHLIIY) are Extracellular-facing. The helical transmembrane segment at 10-30 (FLLAVIQFLLGTFTNGIIVVV) threads the bilayer. Over 31–55 (NGIDLIKHRKMAPLDLLLSCLAVSR) the chain is Cytoplasmic. The helical transmembrane segment at 56–76 (IFLQLFIFYINVVVIFLIEFI) threads the bilayer. At 77 to 81 (TCSAS) the chain is on the extracellular side. Residues 82-102 (CAFLVFVNELELWLATWLGVF) traverse the membrane as a helical segment. Topologically, residues 103–124 (YCAKVASVLHPLFIWLKMRISK) are cytoplasmic. The helical transmembrane segment at 125-145 (SVPWMILGSLLYVSMICIFHI) threads the bilayer. At 146 to 178 (KYTGFMVPYFLRNLFFQNATIQTEVKQAIQIFS) the chain is on the extracellular side. N-linked (GlcNAc...) asparagine glycosylation is present at Asn-163. A helical transmembrane segment spans residues 179 to 199 (FVAELLVPLLIFLVAVLLLIF). The Cytoplasmic portion of the chain corresponds to 200-222 (SLGRHTRQMRNTVAGSRVPGRGA). A helical membrane pass occupies residues 223 to 243 (HISALLSILSFLILYISHYLI). Over 244–257 (KTFLSSLKFHVKRF) the chain is Extracellular. The helical transmembrane segment at 258-278 (VFLFCILVIGTYPSGHSLILI) threads the bilayer. At 279-299 (LGNPKLKQNTKKFLCHSKCCQ) the chain is on the cytoplasmic side.

This sequence belongs to the G-protein coupled receptor T2R family.

It is found in the membrane. Its function is as follows. Receptor that may play a role in the perception of bitterness and is gustducin-linked. May play a role in sensing the chemical composition of the gastrointestinal content. The activity of this receptor may stimulate alpha gustducin, mediate PLC-beta-2 activation and lead to the gating of TRPM5. This is Taste receptor type 2 member 1 (TAS2R1) from Chlorocebus aethiops (Green monkey).